The chain runs to 343 residues: Arginine-hydroxylase NDUFAF5, mitochondrial (343 aa).

The N-terminal 29 residues, methionine 1–valine 29, are a transit peptide targeting the mitochondrion.

It belongs to the methyltransferase superfamily. As to quaternary structure, interacts with NDUFAF8, leading to stabilize NDUFAF5. Interacts with NDUFS7. Interacts with PYURF (via TRM112 domain); the interaction is direct and stabilizes NDUFAF5 protein.

The protein localises to the mitochondrion inner membrane. Arginine hydroxylase that mediates hydroxylation of 'Arg-122' of NDUFS7 and is involved in the assembly of mitochondrial NADH:ubiquinone oxidoreductase complex (complex I, MT-ND1) at early stages. May also have methyltransferase activity. This chain is Arginine-hydroxylase NDUFAF5, mitochondrial, found in Mus musculus (Mouse).